We begin with the raw amino-acid sequence, 327 residues long: Annexin A8 (327 aa).

Annexin repeat units lie at residues 21-92 (FNPD…ALMY), 93-164 (PPYR…CLLQ), 177-249 (GLAL…TVVK), and 253-324 (NLHS…SLVG). Residues Met266, Gly268, Gly270, and Asp310 each contribute to the Ca(2+) site.

Belongs to the annexin family.

This protein is an anticoagulant protein that acts as an indirect inhibitor of the thromboplastin-specific complex, which is involved in the blood coagulation cascade. In Pan troglodytes (Chimpanzee), this protein is Annexin A8 (ANXA8).